Here is a 109-residue protein sequence, read N- to C-terminus: T cell receptor alpha variable 25 (109 aa).

The N-terminal stretch at 1–19 is a signal peptide; sequence MLLITSMLVLWMQLSQVNG. Residues 20 to 109 form the Ig-like domain; sequence QQVMQIPQYQ…TDVGTYFCAG (90 aa). The cysteines at positions 41 and 107 are disulfide-linked. Residues asparagine 42 and asparagine 89 are each glycosylated (N-linked (GlcNAc...) asparagine).

In terms of assembly, alpha-beta TR is a heterodimer composed of an alpha and beta chain; disulfide-linked. The alpha-beta TR is associated with the transmembrane signaling CD3 coreceptor proteins to form the TR-CD3 (TcR or TCR). The assembly of alpha-beta TR heterodimers with CD3 occurs in the endoplasmic reticulum where a single alpha-beta TR heterodimer associates with one CD3D-CD3E heterodimer, one CD3G-CD3E heterodimer and one CD247 homodimer forming a stable octameric structure. CD3D-CD3E and CD3G-CD3E heterodimers preferentially associate with TR alpha and TR beta chains, respectively. The association of the CD247 homodimer is the last step of TcR assembly in the endoplasmic reticulum and is required for transport to the cell surface.

The protein localises to the cell membrane. Functionally, v region of the variable domain of T cell receptor (TR) alpha chain that participates in the antigen recognition. Alpha-beta T cell receptors are antigen specific receptors which are essential to the immune response and are present on the cell surface of T lymphocytes. Recognize peptide-major histocompatibility (MH) (pMH) complexes that are displayed by antigen presenting cells (APC), a prerequisite for efficient T cell adaptive immunity against pathogens. Binding of alpha-beta TR to pMH complex initiates TR-CD3 clustering on the cell surface and intracellular activation of LCK that phosphorylates the ITAM motifs of CD3G, CD3D, CD3E and CD247 enabling the recruitment of ZAP70. In turn ZAP70 phosphorylates LAT, which recruits numerous signaling molecules to form the LAT signalosome. The LAT signalosome propagates signal branching to three major signaling pathways, the calcium, the mitogen-activated protein kinase (MAPK) kinase and the nuclear factor NF-kappa-B (NF-kB) pathways, leading to the mobilization of transcription factors that are critical for gene expression and essential for T cell growth and differentiation. The T cell repertoire is generated in the thymus, by V-(D)-J rearrangement. This repertoire is then shaped by intrathymic selection events to generate a peripheral T cell pool of self-MH restricted, non-autoaggressive T cells. Post-thymic interaction of alpha-beta TR with the pMH complexes shapes TR structural and functional avidity. The chain is T cell receptor alpha variable 25 from Homo sapiens (Human).